A 210-amino-acid polypeptide reads, in one-letter code: Shikimate kinase (210 aa).

An ATP-binding site is contributed by 34 to 39; sequence GAGKSV. A Mg(2+)-binding site is contributed by Ser-38. Positions 56, 80, and 102 each coordinate substrate. Residue Arg-140 participates in ATP binding. Residue Arg-159 participates in substrate binding.

Belongs to the shikimate kinase family. As to quaternary structure, monomer. Mg(2+) is required as a cofactor.

Its subcellular location is the cytoplasm. The catalysed reaction is shikimate + ATP = 3-phosphoshikimate + ADP + H(+). Its pathway is metabolic intermediate biosynthesis; chorismate biosynthesis; chorismate from D-erythrose 4-phosphate and phosphoenolpyruvate: step 5/7. Its function is as follows. Catalyzes the specific phosphorylation of the 3-hydroxyl group of shikimic acid using ATP as a cosubstrate. The protein is Shikimate kinase of Bartonella quintana (strain Toulouse) (Rochalimaea quintana).